The sequence spans 496 residues: Alanine aminotransferase 1 (496 aa).

Residue A2 is modified to N-acetylalanine. At T22 the chain carries Phosphothreonine. K314 carries the N6-(pyridoxal phosphate)lysine modification.

It belongs to the class-I pyridoxal-phosphate-dependent aminotransferase family. Alanine aminotransferase subfamily. As to quaternary structure, homodimer. Pyridoxal 5'-phosphate is required as a cofactor.

The protein resides in the cytoplasm. The enzyme catalyses L-alanine + 2-oxoglutarate = pyruvate + L-glutamate. Its pathway is amino-acid degradation; L-alanine degradation via transaminase pathway; pyruvate from L-alanine: step 1/1. Its function is as follows. Catalyzes the reversible transamination between alanine and 2-oxoglutarate to form pyruvate and glutamate. Participates in cellular nitrogen metabolism and also in liver gluconeogenesis starting with precursors transported from skeletal muscles. The sequence is that of Alanine aminotransferase 1 (GPT) from Bos taurus (Bovine).